We begin with the raw amino-acid sequence, 139 residues long: Classical arabinogalactan protein 3 (139 aa).

The first 21 residues, 1-21 (MALKTLQALIFLGLFAASCLA), serve as a signal peptide directing secretion. Q22 is modified (pyrrolidone carboxylic acid). The disordered stretch occupies residues 30 to 115 (TFLPPVESPS…PAPRADGPVA (86 aa)). Pro residues-rich tracts occupy residues 46–77 (AEPP…PPTT) and 97–107 (PSGPTPAPAPA). D116 carries GPI-anchor amidated aspartate lipidation. A propeptide spans 117–139 (SALTNKAFLVSTVIAGALYAVLA) (removed in mature form).

The protein belongs to the classical AGP family. O-glycosylated on the hydroxyproline residues. Expressed at a low level in roots.

The protein resides in the cell membrane. Proteoglycan that seems to be implicated in diverse developmental roles such as differentiation, cell-cell recognition, embryogenesis and programmed cell death. The protein is Classical arabinogalactan protein 3 (AGP3) of Arabidopsis thaliana (Mouse-ear cress).